Here is a 233-residue protein sequence, read N- to C-terminus: Lipoprotein-releasing system ATP-binding protein LolD (233 aa).

The ABC transporter domain occupies 6–233 (LQCDNLCKRY…TAELSLMGAE (228 aa)). Residue 42–49 (GSSGSGKS) participates in ATP binding.

This sequence belongs to the ABC transporter superfamily. Lipoprotein translocase (TC 3.A.1.125) family. The complex is composed of two ATP-binding proteins (LolD) and two transmembrane proteins (LolC and LolE).

It localises to the cell inner membrane. Its function is as follows. Part of the ABC transporter complex LolCDE involved in the translocation of mature outer membrane-directed lipoproteins, from the inner membrane to the periplasmic chaperone, LolA. Responsible for the formation of the LolA-lipoprotein complex in an ATP-dependent manner. The sequence is that of Lipoprotein-releasing system ATP-binding protein LolD from Escherichia coli O6:K15:H31 (strain 536 / UPEC).